The sequence spans 619 residues: UvrABC system protein C (619 aa).

Residues T20–V98 form the GIY-YIG domain. Residues D207–M242 enclose the UVR domain.

It belongs to the UvrC family. As to quaternary structure, interacts with UvrB in an incision complex.

The protein localises to the cytoplasm. Its function is as follows. The UvrABC repair system catalyzes the recognition and processing of DNA lesions. UvrC both incises the 5' and 3' sides of the lesion. The N-terminal half is responsible for the 3' incision and the C-terminal half is responsible for the 5' incision. This chain is UvrABC system protein C, found in Xanthomonas euvesicatoria pv. vesicatoria (strain 85-10) (Xanthomonas campestris pv. vesicatoria).